Reading from the N-terminus, the 122-residue chain is Insulin-like 3 (122 aa).

The signal sequence occupies residues 1–15 (MRAPLLLMLLALGSA). Cystine bridges form between Cys29–Cys107, Cys41–Cys120, and Cys106–Cys111.

It belongs to the insulin family. As to quaternary structure, heterodimer of a B chain and an A chain linked by two disulfide bonds. As to expression, expressed exclusively in Leydig cells of the testis.

It localises to the secreted. In terms of biological role, seems to play a role in testicular function. May be a trophic hormone with a role in testicular descent in fetal life. Is a ligand for LGR8 receptor. The chain is Insulin-like 3 (Insl3) from Mus musculus (Mouse).